We begin with the raw amino-acid sequence, 340 residues long: NADH-quinone oxidoreductase subunit H (340 aa).

9 helical membrane-spanning segments follow: residues 9 to 29, 81 to 101, 113 to 133, 158 to 178, 184 to 204, 221 to 240, 245 to 264, 273 to 293, and 316 to 336; these read IWII…VAFI, LIAP…IPFA, LLFL…AGWA, GFAL…GIVL, LWHW…ITAV, IVAG…FFLA, MVLV…LSPF, LFAW…FIFT, and VLIP…EFHW.

Belongs to the complex I subunit 1 family. In terms of assembly, NDH-1 is composed of 14 different subunits. Subunits NuoA, H, J, K, L, M, N constitute the membrane sector of the complex.

The protein localises to the cell inner membrane. It carries out the reaction a quinone + NADH + 5 H(+)(in) = a quinol + NAD(+) + 4 H(+)(out). NDH-1 shuttles electrons from NADH, via FMN and iron-sulfur (Fe-S) centers, to quinones in the respiratory chain. The immediate electron acceptor for the enzyme in this species is believed to be ubiquinone. Couples the redox reaction to proton translocation (for every two electrons transferred, four hydrogen ions are translocated across the cytoplasmic membrane), and thus conserves the redox energy in a proton gradient. This subunit may bind ubiquinone. In Coxiella burnetii (strain CbuK_Q154) (Coxiella burnetii (strain Q154)), this protein is NADH-quinone oxidoreductase subunit H.